A 428-amino-acid chain; its full sequence is MLDPKFLRSELEMTAERLATRGFILDVERLSKLEETRKSLQVATEELQASRNAISKSIGQAKAKGEDVAPIMAQVGSLGEELDAKKTELAALLEELNAIAMSVPNLPDESVPTGADESENVEVRRWGTPKEFDFAVKDHVELGENIGGLDFKNAVKITGSRFIVMKGQIARMHRALAQFMLDLHTTEHGYTEAYVPLLVNEDSLLGTGQLPKFGEDLFHTKPATEEGQGLSLIPTAEVPLTNLVRDTIVEEDNLPIKLTAHTPCFRSEAGSYGRDTRGLIRQHQFDKVEMVQLVKPEDSMQALEDLTGHAEVVLQKLGLPYRTMVLCTGDMGFGSAKTYDIEVWLPAQDTYREISSCSNMQDFQARRMQARYKGKTDKKPSLLHTLNGSGLAVGRTLVAVLENYQNADGSITVPEALRGYMGGLKKIG.

L-serine is bound at residue 235–237 (TAE). 266–268 (RSE) provides a ligand contact to ATP. L-serine is bound at residue E289. 353 to 356 (EISS) contributes to the ATP binding site. Residue S389 participates in L-serine binding.

This sequence belongs to the class-II aminoacyl-tRNA synthetase family. Type-1 seryl-tRNA synthetase subfamily. Homodimer. The tRNA molecule binds across the dimer.

Its subcellular location is the cytoplasm. The catalysed reaction is tRNA(Ser) + L-serine + ATP = L-seryl-tRNA(Ser) + AMP + diphosphate + H(+). It catalyses the reaction tRNA(Sec) + L-serine + ATP = L-seryl-tRNA(Sec) + AMP + diphosphate + H(+). It functions in the pathway aminoacyl-tRNA biosynthesis; selenocysteinyl-tRNA(Sec) biosynthesis; L-seryl-tRNA(Sec) from L-serine and tRNA(Sec): step 1/1. Its function is as follows. Catalyzes the attachment of serine to tRNA(Ser). Is also able to aminoacylate tRNA(Sec) with serine, to form the misacylated tRNA L-seryl-tRNA(Sec), which will be further converted into selenocysteinyl-tRNA(Sec). In Shewanella pealeana (strain ATCC 700345 / ANG-SQ1), this protein is Serine--tRNA ligase.